The primary structure comprises 72 residues: UPF0352 protein SO_2176 (72 aa).

This sequence belongs to the UPF0352 family.

The polypeptide is UPF0352 protein SO_2176 (Shewanella oneidensis (strain ATCC 700550 / JCM 31522 / CIP 106686 / LMG 19005 / NCIMB 14063 / MR-1)).